The following is a 330-amino-acid chain: Probable cytosolic iron-sulfur protein assembly protein 1 (330 aa).

7 WD repeats span residues 12-49 (LYKE…FTLI), 56-95 (AHKK…DRTF), 105-144 (GHEN…EEYE), 151-190 (EHSQ…WECV), 195-236 (GHEG…EDDQ), 248-286 (VHKR…WKVF), and 292-330 (CHGV…EKAA).

Belongs to the WD repeat CIA1 family. In terms of assembly, interacts with NAR1.

It localises to the cytoplasm. Its subcellular location is the nucleus. Functionally, essential component of the cytosolic iron-sulfur (Fe/S) protein assembly machinery. Required for the maturation of extramitochondrial Fe/S proteins. The protein is Probable cytosolic iron-sulfur protein assembly protein 1 of Saccharomyces cerevisiae (strain YJM789) (Baker's yeast).